The chain runs to 351 residues: Cytoplasmic dynein 2 light intermediate chain 1 (351 aa).

The disordered stretch occupies residues Gly303–His335. A compositionally biased stretch (basic and acidic residues) spans Asp323–His335.

Belongs to the dynein light intermediate chain family. As to quaternary structure, light intermediate chain of the cytoplasmic dynein complex 2, a multisubunit complex composed at least of eleven different proteins. The cytoplasmic dynein 2 complex consists of two catalytic heavy chains (HCs) and a number of non-catalytic subunits presented by intermediate chains (ICs), light intermediate chains (LICs) and light chains (LCs). Among them, a heavy chain (DYNC2H1), two intermediate chains (DYNC2I2 and DYNC2I1), a light intermediate chain (DYNC2LI1), and a light chain (DYNLT2B) are unique to the dynein-2 complex, but a subset of light chains are also shared by dynein-1 and dynein-2 complexes. Dynein-2 complex is built around two copies of cytoplasmic dynein 2 heavy chain 1 (DYNC2H1). The C-terminal region forms the motor domain, which converts the energy from ATP hydrolysis into movement. Its N-terminal region forms the tail, an extended structure that binds the other subunits and holds the two heavy chains in a homodimer. Interacts with DYNC2H1 (via N-terminus); this interaction stabilizes the dynein-2 complex structure. As to expression, specifically expressed by ciliated cells in brain, lung, spleen, testis and kidney (at protein level). Enriched in the ependymal layer lining the lateral ventricles (at protein level).

The protein resides in the cytoplasm. Its subcellular location is the cell projection. It localises to the cilium. It is found in the cytoskeleton. The protein localises to the cilium basal body. The protein resides in the cilium axoneme. Its subcellular location is the microtubule organizing center. It localises to the centrosome. Acts as one of several non-catalytic accessory components of the cytoplasmic dynein 2 complex (dynein-2 complex), a motor protein complex that drives the movement of cargos along microtubules within cilia and flagella in concert with the intraflagellar transport (IFT) system, facilitating the assembly of these organelles. Involved in the regulation of ciliary length. The polypeptide is Cytoplasmic dynein 2 light intermediate chain 1 (Dync2li1) (Mus musculus (Mouse)).